Here is a 314-residue protein sequence, read N- to C-terminus: Replication initiation protein (314 aa).

Over residues 1–18 (MSKKAEEIQAKQSLEKEN) the composition is skewed to basic and acidic residues. Residues 1–25 (MSKKAEEIQAKQSLEKENSNFSKTG) are disordered.

It belongs to the plasmid replication initiation factor family.

In terms of biological role, this protein is probably a specific topoisomerase involved in initiating replication. This protein is specifically required and may be rate-limiting for replication of the plasmid in vivo. In Staphylococcus aureus, this protein is Replication initiation protein (repE).